Here is a 196-residue protein sequence, read N- to C-terminus: Flagellar transcriptional regulator FlhC (196 aa).

The Zn(2+) site is built by C138, C141, C158, and C161.

The protein belongs to the FlhC family. In terms of assembly, heterohexamer composed of two FlhC and four FlhD subunits. Each FlhC binds a FlhD dimer, forming a heterotrimer, and a hexamer assembles by dimerization of two heterotrimers. Zn(2+) is required as a cofactor.

Its subcellular location is the cytoplasm. Functionally, functions in complex with FlhD as a master transcriptional regulator that regulates transcription of several flagellar and non-flagellar operons by binding to their promoter region. Activates expression of class 2 flagellar genes, including fliA, which is a flagellum-specific sigma factor that turns on the class 3 genes. Also regulates genes whose products function in a variety of physiological pathways. The sequence is that of Flagellar transcriptional regulator FlhC from Sodalis glossinidius (strain morsitans).